Reading from the N-terminus, the 79-residue chain is Small ribosomal subunit protein bS18 (79 aa).

It belongs to the bacterial ribosomal protein bS18 family. As to quaternary structure, part of the 30S ribosomal subunit. Forms a tight heterodimer with protein bS6.

Its function is as follows. Binds as a heterodimer with protein bS6 to the central domain of the 16S rRNA, where it helps stabilize the platform of the 30S subunit. This Rhodopseudomonas palustris (strain BisB18) protein is Small ribosomal subunit protein bS18.